The primary structure comprises 151 residues: Transcriptional regulator MraZ (151 aa).

2 SpoVT-AbrB domains span residues 5–52 (ANAI…PLSE) and 81–124 (AVDL…DEDA).

This sequence belongs to the MraZ family. In terms of assembly, forms oligomers.

The protein localises to the cytoplasm. Its subcellular location is the nucleoid. The protein is Transcriptional regulator MraZ of Pseudomonas syringae pv. syringae (strain B728a).